Consider the following 516-residue polypeptide: UDP-N-acetylmuramyl-tripeptide synthetase (516 aa).

S38 contacts UDP-N-acetyl-alpha-D-muramoyl-L-alanyl-D-glutamate. ATP is bound at residue 116–122 (GTKGKTT). Residues 162 to 163 (TT), S189, and R197 contribute to the UDP-N-acetyl-alpha-D-muramoyl-L-alanyl-D-glutamate site. An N6-carboxylysine modification is found at K231.

This sequence belongs to the MurCDEF family. MurE subfamily. In terms of processing, carboxylation is probably crucial for Mg(2+) binding and, consequently, for the gamma-phosphate positioning of ATP.

The protein localises to the cytoplasm. The protein operates within cell wall biogenesis; peptidoglycan biosynthesis. Catalyzes the addition of an amino acid to the nucleotide precursor UDP-N-acetylmuramoyl-L-alanyl-D-glutamate (UMAG) in the biosynthesis of bacterial cell-wall peptidoglycan. The sequence is that of UDP-N-acetylmuramyl-tripeptide synthetase from Lactobacillus delbrueckii subsp. bulgaricus (strain ATCC 11842 / DSM 20081 / BCRC 10696 / JCM 1002 / NBRC 13953 / NCIMB 11778 / NCTC 12712 / WDCM 00102 / Lb 14).